Reading from the N-terminus, the 253-residue chain is MALQSESPGPVSPSVDPAEIAKFSKLSAQWWDPTGKMAPLHRINPLRISFIRDAACRKFERNAKSLSCLSGLRMLDIGCGAGLLCEPFTRLGAQVIGIDPSATNIAAAKIHADKSHLPIDYRCTTVEEIDPRERFDIVLAMEVIEHVTDVGAFLGRCAALMKPNGIMVVATLNRNWKSFALAIVGAEYVMRWLPRGTHQWDKFVTPAELEQHLHGFGMIVTEQSGLVFNPLADRWKLSADMDVNYMVVAETAP.

The S-adenosyl-L-methionine site is built by Arg47, Gly78, Asp99, and Met141.

This sequence belongs to the methyltransferase superfamily. UbiG/COQ3 family.

It carries out the reaction a 3-demethylubiquinol + S-adenosyl-L-methionine = a ubiquinol + S-adenosyl-L-homocysteine + H(+). It catalyses the reaction a 3-(all-trans-polyprenyl)benzene-1,2-diol + S-adenosyl-L-methionine = a 2-methoxy-6-(all-trans-polyprenyl)phenol + S-adenosyl-L-homocysteine + H(+). The protein operates within cofactor biosynthesis; ubiquinone biosynthesis. Its function is as follows. O-methyltransferase that catalyzes the 2 O-methylation steps in the ubiquinone biosynthetic pathway. The protein is Ubiquinone biosynthesis O-methyltransferase of Rhodopseudomonas palustris (strain HaA2).